A 436-amino-acid chain; its full sequence is UPF0597 protein YhaM (436 aa).

This sequence belongs to the UPF0597 family.

This is UPF0597 protein YhaM from Salmonella paratyphi A (strain ATCC 9150 / SARB42).